Here is a 1152-residue protein sequence, read N- to C-terminus: P3N-PIPO polyprotein (1152 aa).

The Peptidase S30 domain maps to 292 to 437 (VMNQQTLMAF…HSITHRMVQY (146 aa)). Residues H345, D354, and S388 each act as for P1 proteinase activity in the active site. The short motif at 489–492 (KITC) is the Involved in interaction with stylet and aphid transmission element. An Involved in virions binding and aphid transmission motif is present at residues 747-749 (PTK). The 123-residue stretch at 773 to 895 (MFVTKDGYCY…ESEMQHYRVG (123 aa)) folds into the Peptidase C6 domain. Active-site for helper component proteinase activity residues include C781 and H854.

This sequence belongs to the potyviridae P3N-PIPO polyprotein family. As to quaternary structure, interacts (via PIPO domain) with host PCaP1 protein; this interaction may help to anchor the movement complex to the plasma membrane from which the complex could move to the plasmodesmata. Potyviral RNA is expressed as two polyproteins which undergo post-translational proteolytic processing. Genome polyprotein is processed by NIa-pro, P1 and HC-pro proteinases resulting in the production of at least ten individual proteins. P3N-PIPO is cleaved by P1 and HC-pro proteinases resulting in the production of three individual proteins. The P1 proteinase and the HC-pro cleave only their respective C-termini autocatalytically.

It localises to the host cell junction. The protein localises to the host plasmodesma. It catalyses the reaction Hydrolyzes a Gly-|-Gly bond at its own C-terminus, commonly in the sequence -Tyr-Xaa-Val-Gly-|-Gly, in the processing of the potyviral polyprotein.. In terms of biological role, required for aphid transmission and also has proteolytic activity. Only cleaves a Gly-Gly dipeptide at its own C-terminus. Interacts with virions and aphid stylets. Acts as a suppressor of RNA-mediated gene silencing, also known as post-transcriptional gene silencing (PTGS), a mechanism of plant viral defense that limits the accumulation of viral RNAs. May have RNA-binding activity. Its function is as follows. Allows efficient cell to cell propagation, by bypassing the host cell wall barrier. Transports viral genome to neighboring plant cells directly through plasmosdesmata, without any budding. The polypeptide is P3N-PIPO polyprotein (Lettuce mosaic virus (strain 0 / isolate French) (LMV)).